Reading from the N-terminus, the 808-residue chain is Tegument protein UL47 homolog (808 aa).

Disordered stretches follow at residues 1–21 (MQMP…RENQ) and 77–266 (PNEE…SFGE). A compositionally biased stretch (basic and acidic residues) spans 83-92 (DNSRGRDRTR). The segment covering 133–160 (SRARSRRRSSSRRRHRNASMHMHFRGGS) has biased composition (basic residues). Over residues 162–171 (RSATGSQNLI) the composition is skewed to polar residues. Residues 197-214 (RSSRVRRRHRRSSRRRGP) show a composition bias toward basic residues. Basic and acidic residues predominate over residues 235 to 259 (PISDIDQKRLRKNSDTSSRGTRESP).

It belongs to the alphaherpesvirinae HHV-1 UL47 family. Interacts with US3 kinase. Interacts with UL31 and UL34; these interactions seem important for efficient virion nuclear egress. Interacts with UL41/VHS. Post-translationally, phosphorylated by US3. This phosphorylation is required for proper nuclear localization. In terms of processing, O-glycosylated.

It is found in the virion tegument. The protein resides in the host nucleus. Its subcellular location is the host cytoplasm. Functionally, tegument protein that can bind to various RNA transcripts. Plays a role in the attenuation of selective viral and cellular mRNA degradation by modulating the activity of host shutoff RNase UL41/VHS. Also plays a role in the primary envelopment of virions in the perinuclear space, probably by interacting with two nuclear egress proteins UL31 and UL34. Plays an important role in the splicing of glycoprotein/gC transcripts and thereby participates in bird-to-bird viral transmission. This chain is Tegument protein UL47 homolog (MDV060), found in Gallus gallus (Chicken).